The following is a 510-amino-acid chain: Bifunctional purine biosynthesis protein PurH (510 aa).

Residues 1 to 142 (MRALLSVSDK…KNFKDVLIVT (142 aa)) enclose the MGS-like domain.

This sequence belongs to the PurH family.

The enzyme catalyses (6R)-10-formyltetrahydrofolate + 5-amino-1-(5-phospho-beta-D-ribosyl)imidazole-4-carboxamide = 5-formamido-1-(5-phospho-D-ribosyl)imidazole-4-carboxamide + (6S)-5,6,7,8-tetrahydrofolate. It catalyses the reaction IMP + H2O = 5-formamido-1-(5-phospho-D-ribosyl)imidazole-4-carboxamide. Its pathway is purine metabolism; IMP biosynthesis via de novo pathway; 5-formamido-1-(5-phospho-D-ribosyl)imidazole-4-carboxamide from 5-amino-1-(5-phospho-D-ribosyl)imidazole-4-carboxamide (10-formyl THF route): step 1/1. The protein operates within purine metabolism; IMP biosynthesis via de novo pathway; IMP from 5-formamido-1-(5-phospho-D-ribosyl)imidazole-4-carboxamide: step 1/1. This Campylobacter concisus (strain 13826) protein is Bifunctional purine biosynthesis protein PurH.